A 612-amino-acid polypeptide reads, in one-letter code: Siderophore iron transporter 1 (612 aa).

Phosphoserine is present on residues S5, S21, S22, S36, and S41. Helical transmembrane passes span I91–A111, F125–I145, L159–S179, G188–A208, L218–A238, W249–Y269, I299–A319, F331–F351, E365–W385, Y406–I426, W434–Y453, I464–A484, A495–I515, and I573–A593.

Belongs to the major facilitator superfamily.

Its subcellular location is the membrane. Involved in the transport of siderophore iron and so has a role in iron homeostasis. This chain is Siderophore iron transporter 1 (str1), found in Schizosaccharomyces pombe (strain 972 / ATCC 24843) (Fission yeast).